A 181-amino-acid chain; its full sequence is Peptide methionine sulfoxide reductase MsrA (181 aa).

C14 is an active-site residue.

This sequence belongs to the MsrA Met sulfoxide reductase family.

The catalysed reaction is L-methionyl-[protein] + [thioredoxin]-disulfide + H2O = L-methionyl-(S)-S-oxide-[protein] + [thioredoxin]-dithiol. It catalyses the reaction [thioredoxin]-disulfide + L-methionine + H2O = L-methionine (S)-S-oxide + [thioredoxin]-dithiol. Has an important function as a repair enzyme for proteins that have been inactivated by oxidation. Catalyzes the reversible oxidation-reduction of methionine sulfoxide in proteins to methionine. In Bacillus licheniformis (strain ATCC 14580 / DSM 13 / JCM 2505 / CCUG 7422 / NBRC 12200 / NCIMB 9375 / NCTC 10341 / NRRL NRS-1264 / Gibson 46), this protein is Peptide methionine sulfoxide reductase MsrA.